The sequence spans 485 residues: Silicon efflux transporter LSI3 (485 aa).

5 helical membrane-spanning segments follow: residues valine 14–glycine 34, alanine 37–alanine 57, alanine 59–leucine 79, valine 106–leucine 126, and phenylalanine 180–leucine 200. Residues alanine 233–glycine 242 are compositionally biased toward basic and acidic residues. A disordered region spans residues alanine 233 to methionine 261. Helical transmembrane passes span leucine 283–glycine 303, leucine 336–proline 356, valine 377–leucine 397, tryptophan 418–alanine 438, and histidine 461–glycine 481.

The protein belongs to the arsenite-antimonite (ArsB) efflux (TC 2.A.45) family.

It is found in the cell membrane. In terms of biological role, silicon efflux transporter involved in silicon transport in shoots. In the nodes, involved with LSI2 and NIP2-2/LSI6 in silicon intervascular transfer, which is required for the preferential distribution of silicon, such as hyperaccumulation of silicon in the husk. Silicon is beneficial to plant growth and helps plants to overcome abiotic and biotic stresses by preventing lodging (falling over) and increasing resistance to pests and diseases, as well as other stresses. The sequence is that of Silicon efflux transporter LSI3 from Oryza sativa subsp. japonica (Rice).